Reading from the N-terminus, the 183-residue chain is Adenine phosphoribosyltransferase (183 aa).

It belongs to the purine/pyrimidine phosphoribosyltransferase family. Homodimer.

Its subcellular location is the cytoplasm. It catalyses the reaction AMP + diphosphate = 5-phospho-alpha-D-ribose 1-diphosphate + adenine. Its pathway is purine metabolism; AMP biosynthesis via salvage pathway; AMP from adenine: step 1/1. Its function is as follows. Catalyzes a salvage reaction resulting in the formation of AMP, that is energically less costly than de novo synthesis. This chain is Adenine phosphoribosyltransferase, found in Shewanella sp. (strain ANA-3).